The following is a 269-amino-acid chain: MVIRTGIAGVAGRMGGNLVRACLADPAVELTAAIARPGSPVVGRDAGELAGLSAIGLPVVGNLSEVSDKVDVLIDFTLPEVTLAHLESCRSAGIRLVIGTTGFSAEQRQLIAAAAEGMGIVFAPNMSVGVNLALKLLDIAARVVGEHADIEIVEAHHRHKIDAPSGTALRMGEVVAKALGRNLQDCAIYGREGITGIRDAKTIGFSTIRAGDIVGEHTVMFADEGERIEITHKASSRMTFAKGAVRAAVWLMSQGEGLFDMQDVLGLKG.

9-14 is an NAD(+) binding site; the sequence is GVAGRM. Arg36 is an NADP(+) binding site. Residues 99–101 and 123–126 each bind NAD(+); these read GTT and APNM. The Proton donor/acceptor role is filled by His156. His157 lines the (S)-2,3,4,5-tetrahydrodipicolinate pocket. Lys160 functions as the Proton donor in the catalytic mechanism. (S)-2,3,4,5-tetrahydrodipicolinate is bound at residue 166-167; it reads GT.

Belongs to the DapB family.

Its subcellular location is the cytoplasm. It carries out the reaction (S)-2,3,4,5-tetrahydrodipicolinate + NAD(+) + H2O = (2S,4S)-4-hydroxy-2,3,4,5-tetrahydrodipicolinate + NADH + H(+). The enzyme catalyses (S)-2,3,4,5-tetrahydrodipicolinate + NADP(+) + H2O = (2S,4S)-4-hydroxy-2,3,4,5-tetrahydrodipicolinate + NADPH + H(+). The protein operates within amino-acid biosynthesis; L-lysine biosynthesis via DAP pathway; (S)-tetrahydrodipicolinate from L-aspartate: step 4/4. In terms of biological role, catalyzes the conversion of 4-hydroxy-tetrahydrodipicolinate (HTPA) to tetrahydrodipicolinate. The protein is 4-hydroxy-tetrahydrodipicolinate reductase of Methylococcus capsulatus (strain ATCC 33009 / NCIMB 11132 / Bath).